Consider the following 279-residue polypeptide: NAD kinase (279 aa).

D63 serves as the catalytic Proton acceptor. NAD(+)-binding positions include 63–64 (DG), R68, 133–134 (NE), and D163.

It belongs to the NAD kinase family. The cofactor is a divalent metal cation.

It is found in the cytoplasm. It catalyses the reaction NAD(+) + ATP = ADP + NADP(+) + H(+). Its function is as follows. Involved in the regulation of the intracellular balance of NAD and NADP, and is a key enzyme in the biosynthesis of NADP. Catalyzes specifically the phosphorylation on 2'-hydroxyl of the adenosine moiety of NAD to yield NADP. This chain is NAD kinase, found in Protochlamydia amoebophila (strain UWE25).